The chain runs to 430 residues: WD repeat-containing protein jip5 (430 aa).

WD repeat units follow at residues 9–48 (PLSS…AAAE), 72–111 (RHKG…VTSK), 117–158 (TNTD…SFKS), 215–262 (DQEE…DQSE), 272–318 (AGGE…GVVE), and 323–360 (DDIE…EEEE). A compositionally biased stretch (acidic residues) spans 356–374 (EEEEEEEEEEQEDIEDNDD). Positions 356 to 430 (EEEEEEEEEE…NGILKFKGME (75 aa)) are disordered. A compositionally biased stretch (basic and acidic residues) spans 382 to 397 (HALERDSDDSDARADS). Positions 405-416 (RKKRKKKKKGKK) are enriched in basic residues.

It belongs to the WD repeat WDR55 family.

The protein localises to the nucleus. It is found in the nucleolus. The protein is WD repeat-containing protein jip5 (jip5) of Botryotinia fuckeliana (strain B05.10) (Noble rot fungus).